An 880-amino-acid polypeptide reads, in one-letter code: Leucine--tRNA ligase (880 aa).

The short motif at 49-59 (PYPSGRIHMGH) is the 'HIGH' region element. Residues 638 to 642 (KMSKS) carry the 'KMSKS' region motif. ATP is bound at residue K641.

Belongs to the class-I aminoacyl-tRNA synthetase family.

The protein resides in the cytoplasm. The catalysed reaction is tRNA(Leu) + L-leucine + ATP = L-leucyl-tRNA(Leu) + AMP + diphosphate. This Bartonella quintana (strain Toulouse) (Rochalimaea quintana) protein is Leucine--tRNA ligase.